A 233-amino-acid polypeptide reads, in one-letter code: Adenosylcobinamide-GDP ribazoletransferase (233 aa).

Transmembrane regions (helical) follow at residues 24–44 (LWAL…VLYL), 46–66 (LPLS…LLHL), 96–116 (IAGV…LPLL), 117–137 (PFYA…LALA), 158–178 (QLTL…YIEP), 181–198 (ISSL…RLSL), and 209–229 (IGAV…VVWV).

This sequence belongs to the CobS family. Mg(2+) is required as a cofactor.

The protein resides in the cell membrane. It catalyses the reaction alpha-ribazole + adenosylcob(III)inamide-GDP = adenosylcob(III)alamin + GMP + H(+). The enzyme catalyses alpha-ribazole 5'-phosphate + adenosylcob(III)inamide-GDP = adenosylcob(III)alamin 5'-phosphate + GMP + H(+). It functions in the pathway cofactor biosynthesis; adenosylcobalamin biosynthesis; adenosylcobalamin from cob(II)yrinate a,c-diamide: step 7/7. In terms of biological role, joins adenosylcobinamide-GDP and alpha-ribazole to generate adenosylcobalamin (Ado-cobalamin). Also synthesizes adenosylcobalamin 5'-phosphate from adenosylcobinamide-GDP and alpha-ribazole 5'-phosphate. The chain is Adenosylcobinamide-GDP ribazoletransferase from Thermococcus gammatolerans (strain DSM 15229 / JCM 11827 / EJ3).